A 66-amino-acid chain; its full sequence is Defensin-like peptide 2/4 (66 aa).

A signal peptide spans 1–22; it reads MRLAYLLLLLVAVLFQAGGGSA. Residues 23 to 24 constitute a propeptide that is removed on maturation; the sequence is KP. Met-26 bears the D-methionine; in form DLP-2 mark. 3 disulfide bridges follow: Cys-33–Cys-63, Cys-40–Cys-56, and Cys-48–Cys-64.

In terms of processing, stereoinversion of L-Met-26 (in DLP-4) to D-Met-26 (in DLP-2). As to expression, produced by the crural gland and detected in venom from the spur located on each male hind leg. Is also widely expressed in both male and female tissues, including brain, intestine, kidney, lung, spleen and testis.

The protein resides in the secreted. Does not show antimicrobial, myotoxic, hemolytic and cell-promoting activities. The protein is Defensin-like peptide 2/4 of Ornithorhynchus anatinus (Duckbill platypus).